Reading from the N-terminus, the 555-residue chain is Glucose-6-phosphate isomerase (555 aa).

The active-site Proton donor is Glu-356. Residues His-387 and Lys-515 contribute to the active site.

It belongs to the GPI family.

The protein localises to the cytoplasm. It carries out the reaction alpha-D-glucose 6-phosphate = beta-D-fructose 6-phosphate. The protein operates within carbohydrate biosynthesis; gluconeogenesis. Its pathway is carbohydrate degradation; glycolysis; D-glyceraldehyde 3-phosphate and glycerone phosphate from D-glucose: step 2/4. Functionally, catalyzes the reversible isomerization of glucose-6-phosphate to fructose-6-phosphate. The sequence is that of Glucose-6-phosphate isomerase from Desulforapulum autotrophicum (strain ATCC 43914 / DSM 3382 / VKM B-1955 / HRM2) (Desulfobacterium autotrophicum).